The following is a 221-amino-acid chain: Vesicle-associated membrane protein 722 (221 aa).

Residues 1–196 (MAQQSLIYSF…MWFQNMKIKL (196 aa)) lie on the Cytoplasmic side of the membrane. Positions 10 to 114 (FVARGTVILV…SLNKEFGSKL (105 aa)) constitute a Longin domain. Positions 130–190 (KLAKVKAQVS…TQMRRKMWFQ (61 aa)) constitute a v-SNARE coiled-coil homology domain. The chain crosses the membrane as a helical; Anchor for type IV membrane protein span at residues 197-217 (IVLAIIIALILIIILSICGGF). Residues 218–221 (NCGK) lie on the Vesicular side of the membrane.

The protein belongs to the synaptobrevin family. As to expression, highly expressed in stems and roots. Detected in flowers and leaves.

Its subcellular location is the cell membrane. The protein resides in the early endosome membrane. In terms of biological role, involved in the targeting and/or fusion of transport vesicles to their target membrane. The sequence is that of Vesicle-associated membrane protein 722 from Arabidopsis thaliana (Mouse-ear cress).